A 405-amino-acid chain; its full sequence is uncharacterized protein (405 aa).

12 helical membrane passes run I3 to E23, G42 to L62, P73 to V93, I95 to I115, S135 to I155, Y162 to L182, I209 to I229, K248 to I268, G280 to L300, L309 to I329, T346 to V366, and F377 to V397.

This sequence belongs to the major facilitator superfamily. Bcr/CmlA family.

Its subcellular location is the cell inner membrane. This is an uncharacterized protein from Rickettsia felis (strain ATCC VR-1525 / URRWXCal2) (Rickettsia azadi).